The primary structure comprises 287 residues: Ribosomal RNA small subunit methyltransferase A (287 aa).

S-adenosyl-L-methionine contacts are provided by Asn-28, Leu-30, Gly-55, Glu-77, Asp-103, and Asn-123.

This sequence belongs to the class I-like SAM-binding methyltransferase superfamily. rRNA adenine N(6)-methyltransferase family. RsmA subfamily.

It is found in the cytoplasm. It catalyses the reaction adenosine(1518)/adenosine(1519) in 16S rRNA + 4 S-adenosyl-L-methionine = N(6)-dimethyladenosine(1518)/N(6)-dimethyladenosine(1519) in 16S rRNA + 4 S-adenosyl-L-homocysteine + 4 H(+). Specifically dimethylates two adjacent adenosines (A1518 and A1519) in the loop of a conserved hairpin near the 3'-end of 16S rRNA in the 30S particle. May play a critical role in biogenesis of 30S subunits. The sequence is that of Ribosomal RNA small subunit methyltransferase A from Nitrobacter winogradskyi (strain ATCC 25391 / DSM 10237 / CIP 104748 / NCIMB 11846 / Nb-255).